A 124-amino-acid chain; its full sequence is Fluoride-specific ion channel FluC (124 aa).

A run of 4 helical transmembrane segments spans residues 4–24 (LLLVALGGSIGAVFRYLISIF), 35–55 (FGTLLVNVLGSFLMGVIYALG), 60–80 (ISPELKALIGVGLLGALTTFS), and 102–122 (VVLNLSLCLFMVYLGQQLVFS). Na(+)-binding residues include Gly-74 and Thr-77.

This sequence belongs to the fluoride channel Fluc/FEX (TC 1.A.43) family.

The protein resides in the cell inner membrane. The enzyme catalyses fluoride(in) = fluoride(out). With respect to regulation, na(+) is not transported, but it plays an essential structural role and its presence is essential for fluoride channel function. In terms of biological role, fluoride-specific ion channel. Important for reducing fluoride concentration in the cell, thus reducing its toxicity. The polypeptide is Fluoride-specific ion channel FluC (Shewanella sp. (strain ANA-3)).